A 429-amino-acid chain; its full sequence is Ribosomal RNA small subunit methyltransferase B (429 aa).

S-adenosyl-L-methionine contacts are provided by residues 254-260 (CSAPGGK), Asp277, Asp303, and Asp322. Cys375 functions as the Nucleophile in the catalytic mechanism. The segment at 397 to 419 (ALSETGTPDQPGQQNLPGGEEGD) is disordered. Residues 400–412 (ETGTPDQPGQQNL) are compositionally biased toward polar residues.

The protein belongs to the class I-like SAM-binding methyltransferase superfamily. RsmB/NOP family.

Its subcellular location is the cytoplasm. The catalysed reaction is cytidine(967) in 16S rRNA + S-adenosyl-L-methionine = 5-methylcytidine(967) in 16S rRNA + S-adenosyl-L-homocysteine + H(+). Specifically methylates the cytosine at position 967 (m5C967) of 16S rRNA. In Salmonella dublin (strain CT_02021853), this protein is Ribosomal RNA small subunit methyltransferase B.